Reading from the N-terminus, the 180-residue chain is Large ribosomal subunit protein uL6 (180 aa).

The protein belongs to the universal ribosomal protein uL6 family. As to quaternary structure, part of the 50S ribosomal subunit.

Functionally, this protein binds to the 23S rRNA, and is important in its secondary structure. It is located near the subunit interface in the base of the L7/L12 stalk, and near the tRNA binding site of the peptidyltransferase center. This is Large ribosomal subunit protein uL6 from Salinispora tropica (strain ATCC BAA-916 / DSM 44818 / JCM 13857 / NBRC 105044 / CNB-440).